Reading from the N-terminus, the 284-residue chain is MRASLIDGKAIAKKLRDSVKEEVNLRISNGQRVPGLAVILVGCDPASQVYVGSKRKACEEVGFISRSYDLPHTTSEQELLALVSELNNDDSIDGILVQLPLPKNLNADLIIEHINPLKDVDGFHPSNVGKLVLRQPGLRPCTPKGIVTLIESTGIDPKGLDALVIGASNIVGRPMGLELLLAKCTVTTTHRFTKDLEGKVRNADLLVVAVGKPGFIPGEWIKEGAIVIDVGINRLDNGKLVGDVDFGAAKERASFITPVPGGVGPMTVASLIENTLIACQQSSQ.

Residues 166 to 168 (GAS) and I232 each bind NADP(+).

Belongs to the tetrahydrofolate dehydrogenase/cyclohydrolase family. Homodimer.

The catalysed reaction is (6R)-5,10-methylene-5,6,7,8-tetrahydrofolate + NADP(+) = (6R)-5,10-methenyltetrahydrofolate + NADPH. It catalyses the reaction (6R)-5,10-methenyltetrahydrofolate + H2O = (6R)-10-formyltetrahydrofolate + H(+). Its pathway is one-carbon metabolism; tetrahydrofolate interconversion. Its function is as follows. Catalyzes the oxidation of 5,10-methylenetetrahydrofolate to 5,10-methenyltetrahydrofolate and then the hydrolysis of 5,10-methenyltetrahydrofolate to 10-formyltetrahydrofolate. The chain is Bifunctional protein FolD 2 from Colwellia psychrerythraea (strain 34H / ATCC BAA-681) (Vibrio psychroerythus).